Consider the following 341-residue polypeptide: MPSIRLADLAEQLDAELHGDGDIVITGVASMQSATTGHITFMVNPKYREHLGLCQASAVVMTQDDLPFAKSAALVVKNPYLTYARMAQILDTTPQPAQNIAPSAVIDATATLGSNVSVGANAVIESGVQLGDNVVIGAGCFVGKNSKIGAGSRLWANVTIYHDIQIGENCLIQSSTVIGADGFGYANDRGNWVKIPQLGRVIIGDRVEIGACTTIDRGALDDTVIGNGVIIDNQCQIAHNVVIGDNTAVAGGVIMAGSLKIGRYCMIGGASVINGHMEICDKVTVTGMGMVMRPITEPGVYSSGIPLQPNKVWRKTAALVMNIDDMSKRLKAIERTVNQQD.

Histidine 239 (proton acceptor) is an active-site residue.

The protein belongs to the transferase hexapeptide repeat family. LpxD subfamily. As to quaternary structure, homotrimer.

It catalyses the reaction a UDP-3-O-[(3R)-3-hydroxyacyl]-alpha-D-glucosamine + a (3R)-hydroxyacyl-[ACP] = a UDP-2-N,3-O-bis[(3R)-3-hydroxyacyl]-alpha-D-glucosamine + holo-[ACP] + H(+). The enzyme catalyses UDP-3-O-[(3R)-3-hydroxytetradecanoyl]-alpha-D-glucosamine + (3R)-hydroxytetradecanoyl-[ACP] = UDP-2-N,3-O-bis[(3R)-3-hydroxytetradecanoyl]-alpha-D-glucosamine + holo-[ACP] + H(+). It participates in glycolipid biosynthesis; lipid IV(A) biosynthesis; lipid IV(A) from (3R)-3-hydroxytetradecanoyl-[acyl-carrier-protein] and UDP-N-acetyl-alpha-D-glucosamine: step 3/6. Catalyzes the N-acylation of UDP-3-O-(hydroxytetradecanoyl)glucosamine using 3-hydroxytetradecanoyl-ACP as the acyl donor. Is involved in the biosynthesis of lipid A, a phosphorylated glycolipid that anchors the lipopolysaccharide to the outer membrane of the cell. The chain is UDP-3-O-(3-hydroxymyristoyl)glucosamine N-acyltransferase from Salmonella choleraesuis (strain SC-B67).